The chain runs to 1241 residues: MMENWPKKPEGSQWTDDQWKAVVANGRDILVAAAAGSGKTAVLVERIIKKIINEENPVDVDRLLVVTFTNAAAQEMKNRIGEALEKVLIDEPGSQHIRKQLSLLNKASISTIHSFCLQVIRGYYYMLDVDPRFRIANQTENELLKEEVLDDILEEEYGIEDNTIFFELVDRYTSDRSDDDLQRMILALHTESRAHPNPEKWLDKLVEAYDVEGKTIEDLVYASYLLEDVKFQLETAEQHIRKATELAMLPDGPAPRVETLQADLALLGTLSSAARESWTSVYEAMQNVSWQTLKRIKKSDYNEDIVKQVDSLRNKAKDEVKKLQEELFSRKPESFLRDFQDMHPVLEKLVQLVKVFTERFQAMKRDKGMVDFTDLEHFCLQILSEQSENGEMKPSAVALQYRNKFAEVLVDEYQDTNFVQESIIKFVTKDSESEGNLFMVGDVKQSIYRFRLAEPGLFLGKYKRFTQEGLGGGMKIDLAKNFRSRHEVLAGTNFIFKQIMGEEVGEIDYDADAELKLGASYPEGEDVAAELLCIQQTEEEVIDGEEGAEVEKAQLEARLMAQRIKAMVDSGYEVYDRKTDSMRPVQYRDFVILLRSMPWAPQIMEELKLQGIPVYADLATGYFEATEVNIMMNVFRVIDNPMQDIPLAAVLRSPIVGLNDEELATLRAHGKKGSFYEVMSSFLKGAPLEEEKELHDKLEWFYNLLQGWREFARQQSLSDLIWKVYGETGYYDFVGGLPAGKQRQANLRVLYDRARQYEATSFRGLFRFLRFIERILERGDDMGTARALGEQEDVVRIMTIHKSKGLEFPVVFVAGLGRRFNTQDLMKRFLLHKDFGFGSQFIDPRKRIKYTTLSQLAIKRKMKMELIAEEMRVLYVALTRAKEKLILIGTVKDANKEMEKWLDAREHSEWLLPDHIRAGASCYLDWIAPSLYRHRDSEILLELGQGSIPDEIYGYDTSWKVEVVDGNTLLAPEPVQEEKQELLEALREKKAVPLQSERKEEVYDRLMWKYGYEEATSHRAKQSVTEIKRNYQSEEGSDNAFIKKLRAPIQTRPRFMEKKGLTYAERGTAVHAVMQHVDLKKPITEEVIREQIAGMVNKELLTFEQAEEIAIEKVISFFDSDLGKRVLAAKSVEREVPFTMMLAAEEAYQDWQGKSGESILVQGVIDCMIEEEDGITLIDFKTDTIAGKFPGGFDQAKPILEERYKVQLSLYAKALEKSLQHPVKEKCLYFFDGNHVVKIEE.

In terms of domain architecture, UvrD-like helicase ATP-binding spans 12-485 (SQWTDDQWKA…IDLAKNFRSR (474 aa)). 33–40 (AAAGSGKT) serves as a coordination point for ATP. Positions 505-805 (GEIDYDADAE…RIMTIHKSKG (301 aa)) constitute a UvrD-like helicase C-terminal domain.

It belongs to the helicase family. AddA subfamily. In terms of assembly, heterodimer of AddA and AddB/RexB. Mg(2+) serves as cofactor.

The catalysed reaction is Couples ATP hydrolysis with the unwinding of duplex DNA by translocating in the 3'-5' direction.. It catalyses the reaction ATP + H2O = ADP + phosphate + H(+). The heterodimer acts as both an ATP-dependent DNA helicase and an ATP-dependent, dual-direction single-stranded exonuclease. Recognizes the chi site generating a DNA molecule suitable for the initiation of homologous recombination. The AddA nuclease domain is required for chi fragment generation; this subunit has the helicase and 3' -&gt; 5' nuclease activities. This is ATP-dependent helicase/nuclease subunit A from Bacillus cereus (strain ATCC 10987 / NRS 248).